The following is a 492-amino-acid chain: Bifunctional purine biosynthesis protein PurH (492 aa).

The 144-residue stretch at 1 to 144 (MKKAILSVSN…KNFKHVTTIV (144 aa)) folds into the MGS-like domain.

This sequence belongs to the PurH family.

It carries out the reaction (6R)-10-formyltetrahydrofolate + 5-amino-1-(5-phospho-beta-D-ribosyl)imidazole-4-carboxamide = 5-formamido-1-(5-phospho-D-ribosyl)imidazole-4-carboxamide + (6S)-5,6,7,8-tetrahydrofolate. It catalyses the reaction IMP + H2O = 5-formamido-1-(5-phospho-D-ribosyl)imidazole-4-carboxamide. It participates in purine metabolism; IMP biosynthesis via de novo pathway; 5-formamido-1-(5-phospho-D-ribosyl)imidazole-4-carboxamide from 5-amino-1-(5-phospho-D-ribosyl)imidazole-4-carboxamide (10-formyl THF route): step 1/1. Its pathway is purine metabolism; IMP biosynthesis via de novo pathway; IMP from 5-formamido-1-(5-phospho-D-ribosyl)imidazole-4-carboxamide: step 1/1. This Staphylococcus epidermidis (strain ATCC 35984 / DSM 28319 / BCRC 17069 / CCUG 31568 / BM 3577 / RP62A) protein is Bifunctional purine biosynthesis protein PurH.